Here is a 114-residue protein sequence, read N- to C-terminus: MAEITSAKAMARTVRVSPRKTRLVLDLIRGKKVADAIAILKFTPNKAARVIEKTLNSAIANAENNFGLEKANLVVSETFANEGPTMKRFRPRAKGSASPINKRTTHVTVVVSEK.

This sequence belongs to the universal ribosomal protein uL22 family. As to quaternary structure, part of the 50S ribosomal subunit.

Its function is as follows. This protein binds specifically to 23S rRNA; its binding is stimulated by other ribosomal proteins, e.g. L4, L17, and L20. It is important during the early stages of 50S assembly. It makes multiple contacts with different domains of the 23S rRNA in the assembled 50S subunit and ribosome. The globular domain of the protein is located near the polypeptide exit tunnel on the outside of the subunit, while an extended beta-hairpin is found that lines the wall of the exit tunnel in the center of the 70S ribosome. This Streptococcus pyogenes serotype M5 (strain Manfredo) protein is Large ribosomal subunit protein uL22.